Consider the following 275-residue polypeptide: Undecaprenyl-diphosphatase (275 aa).

7 helical membrane-spanning segments follow: residues 1–21 (MTTF…FLPV), 41–61 (ILFL…FVYA), 95–115 (LLII…KDLF), 118–138 (FYNS…LLWT), 192–212 (ATKF…VFEV), 223–243 (FTLT…VFAI), and 255–275 (LYYF…FSLL).

This sequence belongs to the UppP family.

It is found in the cell membrane. The catalysed reaction is di-trans,octa-cis-undecaprenyl diphosphate + H2O = di-trans,octa-cis-undecaprenyl phosphate + phosphate + H(+). Functionally, catalyzes the dephosphorylation of undecaprenyl diphosphate (UPP). Confers resistance to bacitracin. The polypeptide is Undecaprenyl-diphosphatase (Alkaliphilus metalliredigens (strain QYMF)).